The sequence spans 116 residues: Protein alpha-2 (116 aa).

This Bos taurus (Bovine) protein is Protein alpha-2 (alpha).